The sequence spans 234 residues: C2H2-type zinc-finger transcription factor clz7 (234 aa).

Disordered stretches follow at residues 45–99 (RPEG…SRVD) and 118–154 (SAQP…NGTA). 2 stretches are compositionally biased toward low complexity: residues 66–77 (SQSSNTSPTSES) and 140–154 (SSGT…NGTA). A C2H2-type 1; degenerate zinc finger spans residues 159 to 184 (NRCWDHGCNGKKFLNHSNLVRHRREN). A C2H2-type 2; degenerate zinc finger spans residues 191 to 223 (FICPMCGAYFSRSTARNQHLEKKSCNRVRRYSN).

Belongs to the GLI C2H2-type zinc-finger protein family.

The protein localises to the nucleus. Its function is as follows. Transcription factor that probably regulates the expression of the gene cluster that mediates the biosynthesis of squalestatin S1 (SQS1, also known as zaragozic acid A), a heavily oxidized fungal polyketide that offers potent cholesterol lowering activity by targeting squalene synthase (SS). The chain is C2H2-type zinc-finger transcription factor clz7 from Cochliobolus lunatus (Filamentous fungus).